Reading from the N-terminus, the 2255-residue chain is Non-reducing polyketide synthase nvfA (2255 aa).

The interval Ile-13–Glu-251 is N-terminal acylcarrier protein transacylase domain (SAT). Positions Val-365 to Gln-781 constitute a Ketosynthase family 3 (KS3) domain. Active-site for beta-ketoacyl synthase activity residues include Cys-530, His-665, and His-704. A malonyl-CoA:ACP transacylase (MAT) domain region spans residues Leu-887–Ala-1187. The active-site For acyl/malonyl transferase activity is Ser-974. An N-terminal hotdog fold region spans residues Glu-1229 to Ser-1357. The 308-residue stretch at Glu-1229 to Thr-1536 folds into the PKS/mFAS DH domain. Residues Gly-1232–Leu-1535 form a product template (PT) domain region. The active-site Proton acceptor; for dehydratase activity is His-1262. Residues Ser-1385 to Thr-1536 form a C-terminal hotdog fold region. Residue Asp-1443 is the Proton donor; for dehydratase activity of the active site. Residues Thr-1581–Ala-1655 form the Carrier domain. At Ser-1615 the chain carries O-(pantetheine 4'-phosphoryl)serine. Positions His-1809–Asn-2042 are methyltransferase (CMeT) domain. The thioesterase (TE) domain stretch occupies residues Leu-2109 to Tyr-2227. The For thioesterase activity role is filled by Ser-2194.

It catalyses the reaction 3 malonyl-CoA + acetyl-CoA + 2 S-adenosyl-L-methionine = 3,5-dimethylorsellinate + 2 S-adenosyl-L-homocysteine + 3 CO2 + 4 CoA. It participates in secondary metabolite biosynthesis; terpenoid biosynthesis. Functionally, non-reducing polyketide synthase; part of the gene cluster that mediates the biosynthesis of novofumigatonin, a heavily oxygenated meroterpenoid containing a unique orthoester moiety. The first step of the pathway is the synthesis of 3,5-dimethylorsellinic acid (DMOA) by the polyketide synthase nvfA via condensation of one acetyl-CoA starter unit with 3 malonyl-CoA units and 2 methylations. DMOA is then converted to farnesyl-DMOA by the farnesyltransferase nvfB. Epoxydation by FAD-dependent monooxygenase nvfK, followed by a protonation-initiated cyclization catalyzed by the terpene cyclase nvfL leads to the production of asnavolin H. The short chain dehydrogenase nvfC then as a 3-OH dehydrogenase of asnovolin H to yield chemesin D. There are two branches to synthesize asnovolin A from chemesin D. In one branch, chemesin D undergoes Baeyer-Villiger oxidation by nvfH, methylation by nvfJ, and enoyl reduction by the nvfM D enoylreductase that reduces the double bond between C-5'and C-6', to form respectively asnovolin I, asnovolin K, and asnovolin A. In the other branch, the methylation precedes the Baeyer-Villiger oxidation and the enoyl reduction to yield asnovolin A via the asnovolin J intermediate. Asnovolin A is further converted to fumigatonoid A by the Fe(II)/2-oxoglutarate-dependent dioxygenase nvfI that catalyzes an endoperoxidation reaction. The alpha/beta hydrolase nvfD then acts as an epimerase that converts fumigatonoid A to its C-5' epimer, which then undergoes spontaneous or nvfD-catalyzed lactonization. The following step utilizes the ketoreductase nvfG to produce fumigatonoid B. The dioxygenase nvfE further converts fumigatonoid B into fumigatonoid C. Finally the Fe(II)/2-oxoglutarate-dependent dioxygenase nvfF catalyzes two rounds of oxidation to transform fumigatonoid C into the end product, novofumigatonin A. The sequence is that of Non-reducing polyketide synthase nvfA from Aspergillus novofumigatus (strain IBT 16806).